The sequence spans 376 residues: Meiotically up-regulated gene 183 protein (376 aa).

Positions 334-376 (SLENVDDMDDIDVKEPLFSDNDEDVENSDSEDGSESIGSEDEE) are disordered. Over residues 353–376 (DNDEDVENSDSEDGSESIGSEDEE) the composition is skewed to acidic residues.

The protein belongs to the RTT106 family.

Has a role in meiosis. The sequence is that of Meiotically up-regulated gene 183 protein (mug183) from Schizosaccharomyces pombe (strain 972 / ATCC 24843) (Fission yeast).